Reading from the N-terminus, the 225-residue chain is Urease accessory protein UreE (225 aa).

Basic and acidic residues-rich tracts occupy residues 189–202 and 212–225; these read HSHD…EHEG and NSHD…HSRR. Positions 189 to 225 are disordered; the sequence is HSHDFMGHSHEHEGHRHVHNHAGNSHDNEHDEHHSRR.

It belongs to the UreE family.

It is found in the cytoplasm. In terms of biological role, involved in urease metallocenter assembly. Binds nickel. Probably functions as a nickel donor during metallocenter assembly. This is Urease accessory protein UreE from Edwardsiella ictaluri.